A 533-amino-acid polypeptide reads, in one-letter code: MDYKHVDIQKLIELAKYDNYAQEEIVERMIVGQVKHDLWKNINPFDWENLFEKCYSNPKYVFVLLCAYKSIFLCKIDPKIPTSNTIIYLEKIHPIVKQQAKNCDVLSQNNLGFMYEEGIGTEIKINKAKMWYTLSANQGLSFAQYNLGYYYYNKAKYEKSINYFQKSAQSGYYLSNFMLAETYLKLSIPNFNEAIKNYLLAANQGCNISQYRLGMIYFEGKYVNTDMNQAYKWFKLSAKQGNYFSQYGLGRVYYSMDSTKYNCQKAINCFIKSANCGHIYAQKKLIEYYEINNNIAEMIYWCVKSSDVDKIKKYIKINENIENTSDIVYFDLVRKNLEDVGSDILYKCQLLIIQNKYFWKDNVSLCRVKLCEKLENIILKFIDWTNKLQNNSLLLLSCLSFIDDNHNVSIRHHQHTTGLIPYVKQHEFRNKKFITFDKENVSFVNEIIDITNGTDMNEWFESLQFLKLNYQNLMKTSMNSSRIYKDLILIQNLETDIEKYCELMFDEIEYGVYDRNRLFIENREYNMAKLFDN.

5 Sel1-like repeats span residues 105 to 140 (VLSQ…NQGL), 141 to 172 (SFAQ…QSGY), 173 to 206 (YLSN…NQGC), 207 to 242 (NISQ…KQGN), and 243 to 278 (YFSQ…NCGH).

The chain is Putative sel1-like repeat-containing protein L21 from Acanthamoeba polyphaga mimivirus (APMV).